The following is a 506-amino-acid chain: tRNA (guanine(6)-N(2))-methyltransferase THUMP3 (506 aa).

A disordered region spans residues 144-172 (KTKRRKLNPNSSKQKIDNGRGDTTVEKDV). The segment covering 157–172 (QKIDNGRGDTTVEKDV) has biased composition (basic and acidic residues). Residues 170–286 (KDVKKELTNS…DNEVVVGIAL (117 aa)) form the THUMP domain.

This sequence belongs to the methyltransferase superfamily. In terms of assembly, part of the heterodimeric THUMPD3-TRM112 methyltransferase complex; this complex forms an active tRNA methyltransferase, where TRMT112 acts as an activator of the catalytic subunit THUMPD3.

It localises to the cytoplasm. The enzyme catalyses guanosine(6) in tRNA + S-adenosyl-L-methionine = N(2)-methylguanosine(6) in tRNA + S-adenosyl-L-homocysteine + H(+). It catalyses the reaction guanosine(7) in tRNA + S-adenosyl-L-methionine = N(2)-methylguanosine(7) in tRNA + S-adenosyl-L-homocysteine + H(+). Its function is as follows. Catalytic subunit of the THUMPD3-TRM112 methyltransferase complex, that specifically mediates the S-adenosyl-L-methionine-dependent N(2)-methylation of guanosine nucleotide at position 6 (m2G6) in tRNAs. This is one of the major tRNA (guanine-N(2))-methyltransferases. Also catalyzes the S-adenosyl-L-methionine-dependent N(2)-methylation of guanosine nucleotide at position 7 of tRNA(Trp). The sequence is that of tRNA (guanine(6)-N(2))-methyltransferase THUMP3 from Bos taurus (Bovine).